The following is a 330-amino-acid chain: Glycerol-3-phosphate dehydrogenase [NAD(P)+] (330 aa).

Residues tryptophan 11, arginine 33, and lysine 105 each coordinate NADPH. Sn-glycerol 3-phosphate contacts are provided by lysine 105, glycine 133, and serine 135. Alanine 137 is a binding site for NADPH. Sn-glycerol 3-phosphate contacts are provided by lysine 188, aspartate 241, serine 251, arginine 252, and asparagine 253. The active-site Proton acceptor is the lysine 188. Arginine 252 provides a ligand contact to NADPH. The NADPH site is built by valine 276 and glutamate 278.

This sequence belongs to the NAD-dependent glycerol-3-phosphate dehydrogenase family.

The protein resides in the cytoplasm. It carries out the reaction sn-glycerol 3-phosphate + NAD(+) = dihydroxyacetone phosphate + NADH + H(+). The enzyme catalyses sn-glycerol 3-phosphate + NADP(+) = dihydroxyacetone phosphate + NADPH + H(+). It functions in the pathway membrane lipid metabolism; glycerophospholipid metabolism. Functionally, catalyzes the reduction of the glycolytic intermediate dihydroxyacetone phosphate (DHAP) to sn-glycerol 3-phosphate (G3P), the key precursor for phospholipid synthesis. The polypeptide is Glycerol-3-phosphate dehydrogenase [NAD(P)+] (Acidovorax ebreus (strain TPSY) (Diaphorobacter sp. (strain TPSY))).